Consider the following 634-residue polypeptide: DNA-directed RNA polymerase subunit gamma (634 aa).

4 residues coordinate Zn(2+): Cys74, Cys76, Cys89, and Cys92. The Mg(2+) site is built by Asp471, Asp473, and Asp475.

This sequence belongs to the RNA polymerase beta' chain family. RpoC1 subfamily. As to quaternary structure, in cyanobacteria the RNAP catalytic core is composed of 2 alpha, 1 beta, 1 beta', 1 gamma and 1 omega subunit. When a sigma factor is associated with the core the holoenzyme is formed, which can initiate transcription. Mg(2+) is required as a cofactor. The cofactor is Zn(2+).

It carries out the reaction RNA(n) + a ribonucleoside 5'-triphosphate = RNA(n+1) + diphosphate. Functionally, DNA-dependent RNA polymerase catalyzes the transcription of DNA into RNA using the four ribonucleoside triphosphates as substrates. The polypeptide is DNA-directed RNA polymerase subunit gamma (Prochlorococcus marinus (strain MIT 9313)).